A 442-amino-acid chain; its full sequence is Tryptophan synthase beta chain 2 (442 aa).

Lysine 122 carries the N6-(pyridoxal phosphate)lysine modification.

Belongs to the TrpB family. In terms of assembly, tetramer of two alpha and two beta chains. The cofactor is pyridoxal 5'-phosphate.

It catalyses the reaction (1S,2R)-1-C-(indol-3-yl)glycerol 3-phosphate + L-serine = D-glyceraldehyde 3-phosphate + L-tryptophan + H2O. Its pathway is amino-acid biosynthesis; L-tryptophan biosynthesis; L-tryptophan from chorismate: step 5/5. Functionally, the beta subunit is responsible for the synthesis of L-tryptophan from indole and L-serine. The polypeptide is Tryptophan synthase beta chain 2 (trpB2) (Methanosarcina acetivorans (strain ATCC 35395 / DSM 2834 / JCM 12185 / C2A)).